The sequence spans 421 residues: Ig-like V-type domain-containing protein FAM187A (421 aa).

The signal sequence occupies residues 1–18 (MNLAHTTVLLWAWGSLQA). The Extracellular portion of the chain corresponds to 19–377 (FEIVEKENIF…VSFSDPETRA (359 aa)). In terms of domain architecture, Ig-like V-type spans 268–362 (PWLPQVPIQF…IAGFRLGVTS (95 aa)). A disulfide bond links Cys-290 and Cys-346. The N-linked (GlcNAc...) asparagine glycan is linked to Asn-318. A helical transmembrane segment spans residues 378–398 (ALGLILIGYMLITVIFISIHL). The Cytoplasmic segment spans residues 399-421 (CRCCCYLFRFCPNFSPRLSRPQL).

This sequence belongs to the FAM187 family.

Its subcellular location is the membrane. This Bos taurus (Bovine) protein is Ig-like V-type domain-containing protein FAM187A (FAM187A).